Consider the following 506-residue polypeptide: Tripartite terminase subunit 3 (506 aa).

Glutamate 128 functions as the For ATPase activity in the catalytic mechanism. Residues aspartate 282, glutamate 354, and aspartate 475 each act as for nuclease activity in the active site.

Belongs to the herpesviridae TRM3 protein family. Interacts with the terminase subunits TRM1 and TRM2. Interacts with portal protein.

The protein resides in the host nucleus. Component of the molecular motor that translocates viral genomic DNA in empty capsid during DNA packaging. Forms a tripartite terminase complex together with TRM1 and TRM2 in the host cytoplasm. Once the complex reaches the host nucleus, it interacts with the capsid portal vertex. This portal forms a ring in which genomic DNA is translocated into the capsid. TRM3 carries an RNase H-like nuclease activity that plays an important role for the cleavage of concatemeric viral DNA into unit length genomes. In Amazona oratrix (yellow-headed parrot), this protein is Tripartite terminase subunit 3.